Reading from the N-terminus, the 152-residue chain is Acyl carrier protein, mitochondrial (152 aa).

The Carrier domain occupies 73–148; the sequence is KLINERVLLV…DIIKYVADKE (76 aa). The residue at position 108 (serine 108) is an O-(pantetheine 4'-phosphoryl)serine.

The protein belongs to the acyl carrier protein (ACP) family. In terms of assembly, complex I is composed of about 45 different subunits.

Its subcellular location is the mitochondrion. Functionally, carrier of the growing fatty acid chain in fatty acid biosynthesis. Accessory and non-catalytic subunit of the mitochondrial membrane respiratory chain NADH dehydrogenase (Complex I), which functions in the transfer of electrons from NADH to the respiratory chain. The sequence is that of Acyl carrier protein, mitochondrial from Drosophila melanogaster (Fruit fly).